Here is a 315-residue protein sequence, read N- to C-terminus: Homoserine O-succinyltransferase (315 aa).

The active-site Acyl-thioester intermediate is the C142. Substrate contacts are provided by K163 and S192. H235 serves as the catalytic Proton acceptor. The active site involves E237. Residue R249 coordinates substrate. Residues 249–258 (RDCEKSDNAP) show a composition bias toward basic and acidic residues. Positions 249 to 271 (RDCEKSDNAPKPENYFPDDDATK) are disordered.

This sequence belongs to the MetA family.

It is found in the cytoplasm. The catalysed reaction is L-homoserine + succinyl-CoA = O-succinyl-L-homoserine + CoA. The protein operates within amino-acid biosynthesis; L-methionine biosynthesis via de novo pathway; O-succinyl-L-homoserine from L-homoserine: step 1/1. In terms of biological role, transfers a succinyl group from succinyl-CoA to L-homoserine, forming succinyl-L-homoserine. The chain is Homoserine O-succinyltransferase from Pseudoalteromonas translucida (strain TAC 125).